A 270-amino-acid polypeptide reads, in one-letter code: Elongation factor Ts (270 aa).

Positions Thr76–Val79 are involved in Mg(2+) ion dislocation from EF-Tu.

This sequence belongs to the EF-Ts family.

It localises to the cytoplasm. Associates with the EF-Tu.GDP complex and induces the exchange of GDP to GTP. It remains bound to the aminoacyl-tRNA.EF-Tu.GTP complex up to the GTP hydrolysis stage on the ribosome. In Corynebacterium aurimucosum (strain ATCC 700975 / DSM 44827 / CIP 107346 / CN-1) (Corynebacterium nigricans), this protein is Elongation factor Ts.